We begin with the raw amino-acid sequence, 527 residues long: MLDGFVPWPDHLADEYRRRGIWLGRPLGDLLHDSCRRHADRVAVVCDGHRMTYAELSRRADRLAGGLIGLGIRPLDRVVVHLPNIPEFVVLVFALLRAGAIPVLALPGHRKSEISHLCAHSGAVAYAVKDEFGGFDYRELAREIPPVRHVLVSGDAQEFTALESVGGDDVPLPRVDPSDPALFLLSGGTTGLPKLIPRAHDDYAYVMRATAEAMHVGEEVAYLAVNPVAHQAALACPGVFGSLLLGGKAVLTSSVRPDEVFPLIRREHVTVTTVVPSVLRLWADSGQRPDLSHLLVQVGSAPLDPALARRAGEVLGCRIMRWYGISEGLLTHTRFDDPEDVIMGTDGRPMSRDDEVRIVDESLNPVPEGEAGEMIARGPYTIRGYYRAPEENTRSFTPDGFFRTGDLVRRSPEGDITIVGRIKDVINRAGEKVSAEEVERQLRTHPSVQDAAVVGVPDTVLGERTYAFLVLTGAQIRTSAVKEFLRGCGLATYKIPDRIVPLDQLPRTPMGKVDKKTLRALAVSSAR.

ATP is bound at residue 187–188; it reads GG. 230 to 231 contacts substrate; sequence HQ. ATP contacts are provided by residues 300–302, Asp-406, Arg-421, and Lys-512; that span reads SAP. Lys-512 serves as a coordination point for substrate.

This sequence belongs to the ATP-dependent AMP-binding enzyme family. As to quaternary structure, monomer.

In terms of biological role, involved in triostin biosynthesis. Activates quinoxaline-2-carboxylic acid (QA) via catalysis of the ATP-pyrophosphate exchange reaction dependent on QA, and the formation of the corresponding adenylate. Also activates structural analogs of QA such as quinoline-2-carboxylic acid and thieno[3,2-b]pyridine-5-carboxylic acid, but not quinoline-3-carboxylic acid, quinoline-4-carboxylic acid, pyridine-2-carboxylic acid or 2-pyrazinecarboxylic acid. The protein is Triostin synthetase I (trsA) of Streptomyces triostinicus.